Here is a 160-residue protein sequence, read N- to C-terminus: Putative UPF0479 protein YIL177W-A (160 aa).

2 helical membrane-spanning segments follow: residues 39-59 (IVFCLPFFLALFFVPVQKVLQ) and 136-156 (VPMIWLDVFQVFFVFLVISQH).

The protein belongs to the UPF0479 family.

It localises to the membrane. The sequence is that of Putative UPF0479 protein YIL177W-A from Saccharomyces cerevisiae (strain ATCC 204508 / S288c) (Baker's yeast).